A 141-amino-acid polypeptide reads, in one-letter code: Large ribosomal subunit protein uL16c (141 aa).

The span at 1-17 (MLSPRRTKYRKQHRGRL) shows a compositional bias: basic residues. The disordered stretch occupies residues 1–20 (MLSPRRTKYRKQHRGRLKGT).

It belongs to the universal ribosomal protein uL16 family. As to quaternary structure, part of the 50S ribosomal subunit.

It is found in the plastid. The protein resides in the chloroplast. This is Large ribosomal subunit protein uL16c from Staurastrum punctulatum (Green alga).